A 711-amino-acid chain; its full sequence is MSRSKGPLSFKDVAVAFSQEEWQQLDPEERTTYRDVMLETYSNLVSVGYDVTKPNMIIKLEQGEEPWTVEGDRHAQRHLEISKVYDPREGIEEIGEKHLQCDDDPYCWRAEKGAAFDEAYTLETALISPSSGAHSCVSCGETLESVSELISSDGSYALEKPSMCFECGKAYGESLEDFNQDEGNSSQHDENILQKVTILEKPFAYECMEALDSESVFMARERAYMGEKPYDWGDSGPDFIQMSDFSTYPRSQMELKPFECTQCGKSFCKKSKFIIHQRAHTGEKPYACSVCGKSFSQKGTLTVHRRSHLEEKPYKCNECGKTFCQKLHLTQHQRTHSGEKPYECSECGKSFCQKTHLTLHQRNHSGERPYPCNECGKSFSRKSALNDHQRTHTGEKLYKCNECGKSYYRKSTLITHQRTHTGEKPYQCSECGKFFSRVSYLTIHYRSHLEEKPYECTECGKTFNLNSAFIRHWKVHAEERVQECGECGKPSPLQCAPDHTGDLGEKRYECNECGKTFLDSSAFHRHQSVPEGEKTYECNICGKSFSDSSCYTVHYRGHSEEKPFGCSECGKTFSHNSSLFRHQRVHTGEKPYECYECGKFFSQKSYLTIHHRIHSGEKPYECSKCGKVFSRMSNLTVHYRSHSGEKPYECNECGKVFSQKSYLTVHYRTHSGEKPYECNECGKKFHHRSAFNSHQRIHKRGTVNVLTVEKL.

The KRAB domain maps to 8–79; that stretch reads LSFKDVAVAF…EGDRHAQRHL (72 aa). Residues Lys97 and Lys256 each participate in a glycyl lysine isopeptide (Lys-Gly) (interchain with G-Cter in SUMO2) cross-link. Residues 170–257 are required for interaction with RB1; that stretch reads AYGESLEDFN…YPRSQMELKP (88 aa). 2 consecutive C2H2-type zinc fingers follow at residues 258–280 and 286–308; these read FECTQCGKSFCKKSKFIIHQRAH and YACSVCGKSFSQKGTLTVHRRSH. A Glycyl lysine isopeptide (Lys-Gly) (interchain with G-Cter in SUMO2) cross-link involves residue Lys312. C2H2-type zinc fingers lie at residues 314–336, 342–364, 370–392, 398–420, 426–448, and 454–476; these read YKCNECGKTFCQKLHLTQHQRTH, YECSECGKSFCQKTHLTLHQRNH, YPCNECGKSFSRKSALNDHQRTH, YKCNECGKSYYRKSTLITHQRTH, YQCSECGKFFSRVSYLTIHYRSH, and YECTECGKTFNLNSAFIRHWKVH. Lys354 is covalently cross-linked (Glycyl lysine isopeptide (Lys-Gly) (interchain with G-Cter in SUMO2)). Residues 414–711 are interaction with AR; sequence ITHQRTHTGE…TVNVLTVEKL (298 aa). The C2H2-type 9; degenerate zinc-finger motif lies at 508–530; sequence YECNECGKTFLDSSAFHRHQSVP. A Glycyl lysine isopeptide (Lys-Gly) (interchain with G-Cter in SUMO2) cross-link involves residue Lys534. 6 consecutive C2H2-type zinc fingers follow at residues 536–558, 564–586, 592–614, 620–642, 648–670, and 676–698; these read YECNICGKSFSDSSCYTVHYRGH, FGCSECGKTFSHNSSLFRHQRVH, YECYECGKFFSQKSYLTIHHRIH, YECSKCGKVFSRMSNLTVHYRSH, YECNECGKVFSQKSYLTVHYRTH, and YECNECGKKFHHRSAFNSHQRIH.

This sequence belongs to the krueppel C2H2-type zinc-finger protein family. In terms of assembly, interacts with AR. May also interact with other nuclear hormone receptors such as NR3C1/GR. Interacts with RB1.

It is found in the nucleus. Functionally, may repress E2F-dependent transcription. May promote AR-dependent transcription. The polypeptide is RB-associated KRAB zinc finger protein (Rbak) (Mus musculus (Mouse)).